The primary structure comprises 87 residues: Small ribosomal subunit protein bS20 (87 aa).

The disordered stretch occupies residues 1 to 29 (MANTAQARKRARQAVKQNAHNSSQRSTLR). Polar residues predominate over residues 20–29 (HNSSQRSTLR).

It belongs to the bacterial ribosomal protein bS20 family.

Binds directly to 16S ribosomal RNA. This is Small ribosomal subunit protein bS20 from Janthinobacterium sp. (strain Marseille) (Minibacterium massiliensis).